A 163-amino-acid polypeptide reads, in one-letter code: I-Kappa-B like protein N3 (163 aa).

ANK repeat units follow at residues 62–95 (LGDTCIHVAALANRGKQAIQLIEKLVEYGANLNT) and 100–130 (NGDTVLDIAVKNKDHELTVWLWKQPSINLQT).

This sequence belongs to the polydnaviridae I-Kappa-B like protein family.

Its function is as follows. Suppresses the host immune response through NF-kappa-B inactivation. Possesses ankyrin repeat domains required for NF-kappa-B binding but lacks the regulatory regions required for dissociation from NF-kappa-B and degradation. Therefore, prevents host NF-kappa-B release and subsequent activation. This Microplitis demolitor (Parasitoid wasp) protein is I-Kappa-B like protein N3 (N6).